We begin with the raw amino-acid sequence, 2251 residues long: U3 small nucleolar RNA-associated protein 10 (2251 aa).

The HEAT repeat unit spans residues 945–983 (VVPLLLTALADAEAAIRLAAIACLAHILAICKYAGDLAK). Helical transmembrane passes span 962–982 (LAAI…GDLA) and 1460–1480 (LLVD…LLVD).

It belongs to the HEATR1/UTP10 family. Component of the ribosomal small subunit (SSU) processome.

It localises to the nucleus. Its subcellular location is the nucleolus. The protein localises to the membrane. Its function is as follows. Involved in nucleolar processing of pre-18S ribosomal RNA. Involved in ribosome biosynthesis. This is U3 small nucleolar RNA-associated protein 10 from Mycosarcoma maydis (Corn smut fungus).